Consider the following 437-residue polypeptide: 3-phosphoshikimate 1-carboxyvinyltransferase (437 aa).

3-phosphoshikimate-binding residues include K22, S23, and R27. K22 provides a ligand contact to phosphoenolpyruvate. Phosphoenolpyruvate is bound by residues G94 and R122. 3-phosphoshikimate-binding residues include S167, Q169, D314, and K341. Phosphoenolpyruvate is bound at residue Q169. The Proton acceptor role is filled by D314. Residues R345 and R389 each coordinate phosphoenolpyruvate.

It belongs to the EPSP synthase family. Monomer.

It is found in the cytoplasm. The catalysed reaction is 3-phosphoshikimate + phosphoenolpyruvate = 5-O-(1-carboxyvinyl)-3-phosphoshikimate + phosphate. Its pathway is metabolic intermediate biosynthesis; chorismate biosynthesis; chorismate from D-erythrose 4-phosphate and phosphoenolpyruvate: step 6/7. In terms of biological role, catalyzes the transfer of the enolpyruvyl moiety of phosphoenolpyruvate (PEP) to the 5-hydroxyl of shikimate-3-phosphate (S3P) to produce enolpyruvyl shikimate-3-phosphate and inorganic phosphate. The polypeptide is 3-phosphoshikimate 1-carboxyvinyltransferase (Oenococcus oeni (strain ATCC BAA-331 / PSU-1)).